A 98-amino-acid polypeptide reads, in one-letter code: Integration host factor subunit alpha (98 aa).

Residues 50-71 (GNFDLRDKNQRPGRNPKTGEDI) are disordered.

It belongs to the bacterial histone-like protein family. As to quaternary structure, heterodimer of an alpha and a beta chain.

In terms of biological role, this protein is one of the two subunits of integration host factor, a specific DNA-binding protein that functions in genetic recombination as well as in transcriptional and translational control. This Proteus mirabilis (strain HI4320) protein is Integration host factor subunit alpha.